A 576-amino-acid polypeptide reads, in one-letter code: Proline--tRNA ligase (576 aa).

The protein belongs to the class-II aminoacyl-tRNA synthetase family. ProS type 1 subfamily. In terms of assembly, homodimer.

The protein resides in the cytoplasm. It carries out the reaction tRNA(Pro) + L-proline + ATP = L-prolyl-tRNA(Pro) + AMP + diphosphate. In terms of biological role, catalyzes the attachment of proline to tRNA(Pro) in a two-step reaction: proline is first activated by ATP to form Pro-AMP and then transferred to the acceptor end of tRNA(Pro). As ProRS can inadvertently accommodate and process non-cognate amino acids such as alanine and cysteine, to avoid such errors it has two additional distinct editing activities against alanine. One activity is designated as 'pretransfer' editing and involves the tRNA(Pro)-independent hydrolysis of activated Ala-AMP. The other activity is designated 'posttransfer' editing and involves deacylation of mischarged Ala-tRNA(Pro). The misacylated Cys-tRNA(Pro) is not edited by ProRS. This is Proline--tRNA ligase from Bordetella bronchiseptica (strain ATCC BAA-588 / NCTC 13252 / RB50) (Alcaligenes bronchisepticus).